The following is a 436-amino-acid chain: ATP-sensitive inward rectifier potassium channel 14 (436 aa).

Topologically, residues 1-83 (MGLARALRRL…LSDLFTTCVD (83 aa)) are cytoplasmic. Residues 14–43 (LDSGDSRAGDEEEAGPGLCRNGWAPAPVQS) are disordered. Cysteine 81 is subject to S-nitrosocysteine. Residues 84-110 (VRWRWMCLLFSCSFLASWLLFGLAFWL) traverse the membrane as a helical segment. Over 111–133 (IASLHGDLAAPPPPAPCFSHVAS) the chain is Extracellular. The helical; Pore-forming intramembrane region spans 134 to 150 (FLAAFLFALETQTSIGY). The short motif at 147–152 (SIGYGV) is the Selectivity filter element. Residues 151–159 (GVRSVTEEC) lie on the Extracellular side of the membrane. Residues 160–187 (PAAVAAVVLQCIAGCVLDAFVVGAVMAK) form a helical membrane-spanning segment. The Cytoplasmic segment spans residues 188–436 (MAKPKKRNET…TPTLALTLPP (249 aa)). Residues 400–418 (QEEDEDDETEEGNGVETED) show a composition bias toward acidic residues. The interval 400–436 (QEEDEDDETEEGNGVETEDGAASPRVLTPTLALTLPP) is disordered. Residues 426-436 (LTPTLALTLPP) are compositionally biased toward low complexity.

Belongs to the inward rectifier-type potassium channel (TC 1.A.2.1) family. KCNJ14 subfamily. In terms of tissue distribution, expressed preferentially in retina.

Its subcellular location is the membrane. It carries out the reaction K(+)(in) = K(+)(out). With respect to regulation, channel activity is regulated by variations of cytosolic pH; channels are activated by alkaline and inhibited by acidic pH values. Inhibited by Ba(2+) and Cs(+) in a voltage-dependent manner; sensitivity to those inhibitors is lower than in other Kir channels. Its function is as follows. Inward rectifier potassium channels are characterized by a greater tendency to allow potassium to flow into the cell rather than out of it. Their voltage dependence is regulated by the concentration of extracellular potassium; as external potassium is raised, the voltage range of the channel opening shifts to more positive voltages. This Homo sapiens (Human) protein is ATP-sensitive inward rectifier potassium channel 14 (KCNJ14).